Reading from the N-terminus, the 380-residue chain is 8-amino-7-oxononanoate synthase (380 aa).

Position 26 (Arg-26) interacts with substrate. 104–105 (GY) is a pyridoxal 5'-phosphate binding site. Residue His-129 coordinates substrate. Pyridoxal 5'-phosphate is bound by residues Ser-175, 200–203 (DEAH), and 232–235 (TLSK). Lys-235 is subject to N6-(pyridoxal phosphate)lysine. Position 345 (Thr-345) interacts with substrate.

Belongs to the class-II pyridoxal-phosphate-dependent aminotransferase family. BioF subfamily. As to quaternary structure, homodimer. Requires pyridoxal 5'-phosphate as cofactor.

The catalysed reaction is 6-carboxyhexanoyl-[ACP] + L-alanine + H(+) = (8S)-8-amino-7-oxononanoate + holo-[ACP] + CO2. The protein operates within cofactor biosynthesis; biotin biosynthesis. Catalyzes the decarboxylative condensation of pimeloyl-[acyl-carrier protein] and L-alanine to produce 8-amino-7-oxononanoate (AON), [acyl-carrier protein], and carbon dioxide. In Mycolicibacterium vanbaalenii (strain DSM 7251 / JCM 13017 / BCRC 16820 / KCTC 9966 / NRRL B-24157 / PYR-1) (Mycobacterium vanbaalenii), this protein is 8-amino-7-oxononanoate synthase.